We begin with the raw amino-acid sequence, 183 residues long: Dual-action ribosomal maturation protein DarP (183 aa).

Residues 1–27 (MSSHSQEPVGEENFDDSEYDRPSKSQV) are disordered. Residues 9–18 (VGEENFDDSE) show a composition bias toward acidic residues.

The protein belongs to the DarP family.

It is found in the cytoplasm. Functionally, member of a network of 50S ribosomal subunit biogenesis factors which assembles along the 30S-50S interface, preventing incorrect 23S rRNA structures from forming. Promotes peptidyl transferase center (PTC) maturation. The protein is Dual-action ribosomal maturation protein DarP of Bordetella parapertussis (strain 12822 / ATCC BAA-587 / NCTC 13253).